The following is a 498-amino-acid chain: ATP synthase subunit beta, chloroplastic (498 aa).

T6 is modified (phosphothreonine). S13 carries the phosphoserine modification. Residue 172 to 179 (GGAGVGKT) coordinates ATP.

Belongs to the ATPase alpha/beta chains family. As to quaternary structure, F-type ATPases have 2 components, CF(1) - the catalytic core - and CF(0) - the membrane proton channel. CF(1) has five subunits: alpha(3), beta(3), gamma(1), delta(1), epsilon(1). CF(0) has four main subunits: a(1), b(1), b'(1) and c(9-12).

It is found in the plastid. Its subcellular location is the chloroplast thylakoid membrane. It catalyses the reaction ATP + H2O + 4 H(+)(in) = ADP + phosphate + 5 H(+)(out). Produces ATP from ADP in the presence of a proton gradient across the membrane. The catalytic sites are hosted primarily by the beta subunits. The polypeptide is ATP synthase subunit beta, chloroplastic (Crucihimalaya wallichii (Rock-cress)).